The following is a 402-amino-acid chain: uncharacterized protein (402 aa).

Residues 1–12 (MFQQLSASIRHN) lie on the Cytoplasmic side of the membrane. The helical transmembrane segment at 13 to 33 (AHIIFLCISWYFISSLASQVT) threads the bilayer. Over 34–50 (KQVLTVCPLPLFLGEFQ) the chain is Extracellular. The helical transmembrane segment at 51–71 (FIYTAVLAWFTCYIAYSFPGF) threads the bilayer. The Cytoplasmic portion of the chain corresponds to 72 to 103 (YRIFPNGTFPEYYIDDRETSRAARKESKLSSL). The helical transmembrane segment at 104-124 (IIPPSKPILQTVLPLGLFQFV) threads the bilayer. Residues 125 to 134 (GKYFGHTATS) are Extracellular-facing. A helical transmembrane segment spans residues 135–155 (LVPVSTVASIKTLSPMFILLL). Residues 156–165 (QKILKISTLK) lie on the Cytoplasmic side of the membrane. A helical transmembrane segment spans residues 166-186 (ITLTLIFSLCTLVLGVWIIVQ). At 187 to 206 (EDNRSPASSNELREFSKYGV) the chain is on the extracellular side. A helical transmembrane segment spans residues 207-227 (ICAMISMFIFVLQNIYGKTVF). Residues 228-271 (TYRSQTDESQSNSGFSRQESPLPLYEKLDEKLVAKKKPKSYDKL) are Cytoplasmic-facing. A helical membrane pass occupies residues 272-292 (TLMIYISLVGFCLSFGWFITL). The Extracellular portion of the chain corresponds to 293–353 (EFPVLFRYFF…TYSIANLMKR (61 aa)). A helical transmembrane segment spans residues 354 to 374 (FAIIAVSWVFIGRRITWLQVF). Residues 375 to 402 (GLVLNTLGLFLYERCTSQSKIKAKIRPE) are Cytoplasmic-facing.

The protein belongs to the TPT transporter family.

Its subcellular location is the membrane. This is an uncharacterized protein from Saccharomyces cerevisiae (strain ATCC 204508 / S288c) (Baker's yeast).